The chain runs to 928 residues: MAARGGAERAAGAGDGRRGQRRHLRPGRVLAALRGPAAPGAGGARAALAAALLWATWALLLAAPAAGRPATTPPAPPPEEAASPAPPASPSPPGPDGDDAASPDNSTDVRAALRLAQAAGENSRFFVCPPPSGATVVRLAPARPCPEYGLGRNYTEGIGVIYKENIAPYTFKAIIYYKNVIVTTTWAGSTYAAITNQYTDRVPVGMGEITDLVDKKWRCLSKAEYLRSGRKVVAFDRDDDPWEAPLKPARLSAPGVRGWHTTDDVYTALGSAGLYRTGTSVNCIVEEVEARSVYPYDSFALSTGDIIYMSPFYGLREGAHREHTSYSPERFQQIEGYYKRDMATGRRLKEPVSRNFLRTQHVTVAWDWVPKRKNVCSLAKWREADEMLRDESRGNFRFTARSLSATFVSDSHTFALQNVPLSDCVIEEAEAAVERVYRERYNGTHVLSGSLETYLARGGFVVAFRPMLSNELAKLYLQELARSNGTLEGLFAAAAPKPGPRRARRPRRLRPAPGRGQRARRRRHAGGRVTTVSLAEFAALQFTHDHTRTSEHHVHRLASPWCLLQNKERALWAEAAKLNPSAAASAALDRRAAARMLGDAMAVTYCHELGEGRCSSRTRMRAPGGVCYSRRGSFFGNESEPVEGQLGEDNELLPGRELVEPCTANHKRYFRFGADYVYYENYAYVRRVPLAELEVISTFVDLNLTVLEDREFLPLEVYTRAELADTGLLDYSEIQRRNQLHELRFYDIDRVVKTDGNMAIMRGLANFFQGLGAVGQAVGTVVLGAAGAALSTVSGIASFIANPFGALATGLLVLAGLVAAFLAYRYISRLRSNPMKALYPITTRALKDDPGRNRPGEEEEEFDAAKLEQAREMIKYMSLVSAVERQEHKAKKSNKAARLLATRLTQLALRRRAPPEYQQLPMADVGGA.

The span at 1–12 (MAARGGAERAAG) shows a compositional bias: low complexity. 2 disordered regions span residues 1–25 (MAARGGAERAAGAGDGRRGQRRHLR) and 67–105 (GRPATTPPAPPPEEAASPAPPASPSPPGPDGDDAASPDN). The N-terminal stretch at 1 to 62 (MAARGGAERA…LWATWALLLA (62 aa)) is a signal peptide. The Virion surface segment spans residues 63 to 803 (APAAGRPATT…SGIASFIANP (741 aa)). Over residues 71–95 (TTPPAPPPEEAASPAPPASPSPPGP) the composition is skewed to pro residues. N105 and N153 each carry an N-linked (GlcNAc...) asparagine; by host glycan. Cystine bridges form between C128/C606, C145/C562, C219/C283, C376/C424, and C627/C662. 2 involved in fusion and/or binding to host membrane regions span residues 185–191 (TWAGSTY) and 270–277 (GSAGLYRT). N442 and N484 each carry an N-linked (GlcNAc...) asparagine; by host glycan. The disordered stretch occupies residues 495 to 525 (APKPGPRRARRPRRLRPAPGRGQRARRRRHA). Residues 499–510 (GPRRARRPRRLR) are compositionally biased toward basic residues. Residues N637 and N703 are each glycosylated (N-linked (GlcNAc...) asparagine; by host). Hydrophobic membrane proximal region stretches follow at residues 748–801 (IDRV…SFIA) and 781–801 (VVLGAAGAALSTVSGIASFIA). Residues 804–824 (FGALATGLLVLAGLVAAFLAY) traverse the membrane as a helical segment. Residues 825–928 (RYISRLRSNP…QLPMADVGGA (104 aa)) are Intravirion-facing. A Golgi targeting motif is present at residues 876–879 (YMSL). The Internalization motif signature appears at 917-920 (YQQL).

This sequence belongs to the herpesviridae glycoprotein B family. Homotrimer; disulfide-linked. Binds to heparan sulfate proteoglycans. Interacts with gH/gL heterodimer. A proteolytic cleavage by host furin generates two subunits that remain linked by disulfide bonds.

The protein localises to the virion membrane. The protein resides in the host cell membrane. Its subcellular location is the host endosome membrane. It is found in the host Golgi apparatus membrane. Its function is as follows. Envelope glycoprotein that forms spikes at the surface of virion envelope. Essential for the initial attachment to heparan sulfate moieties of the host cell surface proteoglycans. Involved in fusion of viral and cellular membranes leading to virus entry into the host cell. Following initial binding to its host receptors, membrane fusion is mediated by the fusion machinery composed at least of gB and the heterodimer gH/gL. May be involved in the fusion between the virion envelope and the outer nuclear membrane during virion egress. This Bovine herpesvirus 1.1 (strain P8-2) (BoHV-1) protein is Envelope glycoprotein B.